Here is a 396-residue protein sequence, read N- to C-terminus: Phosphopentomutase (396 aa).

Aspartate 14, aspartate 286, histidine 291, aspartate 327, histidine 328, and histidine 339 together coordinate Mn(2+).

Belongs to the phosphopentomutase family. Mn(2+) is required as a cofactor.

Its subcellular location is the cytoplasm. It carries out the reaction 2-deoxy-alpha-D-ribose 1-phosphate = 2-deoxy-D-ribose 5-phosphate. It catalyses the reaction alpha-D-ribose 1-phosphate = D-ribose 5-phosphate. Its pathway is carbohydrate degradation; 2-deoxy-D-ribose 1-phosphate degradation; D-glyceraldehyde 3-phosphate and acetaldehyde from 2-deoxy-alpha-D-ribose 1-phosphate: step 1/2. In terms of biological role, isomerase that catalyzes the conversion of deoxy-ribose 1-phosphate (dRib-1-P) and ribose 1-phosphate (Rib-1-P) to deoxy-ribose 5-phosphate (dRib-5-P) and ribose 5-phosphate (Rib-5-P), respectively. The chain is Phosphopentomutase from Staphylococcus carnosus (strain TM300).